The primary structure comprises 1122 residues: AP-4 complex subunit epsilon-1 (1122 aa).

Phosphoserine is present on serine 699. 2 stretches are compositionally biased toward basic and acidic residues: residues 714-728 (YLPK…KPEA) and 745-760 (TTRK…STEE). Disordered stretches follow at residues 714–760 (YLPK…STEE) and 797–861 (SKLK…AEKL). An interaction with TEPSIN region spans residues 726–1122 (PEASHVPAEG…CHCQKVMQTS (397 aa)). Over residues 841–853 (ELSSELFRSESLS) the composition is skewed to low complexity. The residue at position 851 (serine 851) is a Phosphoserine.

It belongs to the adaptor complexes large subunit family. In terms of assembly, adaptor protein complex 4 (AP-4) is a heterotetramer composed of two large adaptins (epsilon-type subunit AP4E1 and beta-type subunit AP4B1), a medium adaptin (mu-type subunit AP4M1) and a small adaptin (sigma-type AP4S1). Interacts with TEPSIN. Interacts with GRIA2; probably indirect it mediates the somatodendritic localization of GRIA2 in neurons.

It localises to the golgi apparatus. The protein resides in the trans-Golgi network membrane. Component of the adaptor protein complex 4 (AP-4). Adaptor protein complexes are vesicle coat components involved both in vesicle formation and cargo selection. They control the vesicular transport of proteins in different trafficking pathways. AP-4 forms a non clathrin-associated coat on vesicles departing the trans-Golgi network (TGN) and may be involved in the targeting of proteins from the trans-Golgi network (TGN) to the endosomal-lysosomal system. It is also involved in protein sorting to the basolateral membrane in epithelial cells and the proper asymmetric localization of somatodendritic proteins in neurons. AP-4 is involved in the recognition and binding of tyrosine-based sorting signals found in the cytoplasmic part of cargos, but may also recognize other types of sorting signal. The chain is AP-4 complex subunit epsilon-1 from Mus musculus (Mouse).